The following is a 169-amino-acid chain: MKLNEIRDNEGATKNRMRVGRGIGSGKGKTGGRGVKGQKARTGVSIKGFEGGQMPLHRRLPKRGFNNIHAHDLNEVNLGRVQAAVDAGKLDANAPVTVDALVKAGIIARARDGVKLLGVGELTAKLSFEVTRASKSAVEAVEKAGGSVTTTFAAGVAHRGASEGAVASA.

Basic and acidic residues predominate over residues 1-13; the sequence is MKLNEIRDNEGAT. The disordered stretch occupies residues 1 to 40; it reads MKLNEIRDNEGATKNRMRVGRGIGSGKGKTGGRGVKGQKA. Residues 21–35 show a composition bias toward gly residues; the sequence is RGIGSGKGKTGGRGV.

This sequence belongs to the universal ribosomal protein uL15 family. Part of the 50S ribosomal subunit.

In terms of biological role, binds to the 23S rRNA. In Methylorubrum populi (strain ATCC BAA-705 / NCIMB 13946 / BJ001) (Methylobacterium populi), this protein is Large ribosomal subunit protein uL15.